Here is a 524-residue protein sequence, read N- to C-terminus: Cytochrome P450 704B1 (524 aa).

A helical membrane pass occupies residues 2–22 (SLCLVIACMVTSWIFLHRWGQ). Residue Cys-471 participates in heme binding.

This sequence belongs to the cytochrome P450 family. It depends on heme as a cofactor.

The protein resides in the membrane. It carries out the reaction an omega-methyl-long-chain fatty acid + reduced [NADPH--hemoprotein reductase] + O2 = an omega-hydroxy-long-chain fatty acid + oxidized [NADPH--hemoprotein reductase] + H2O + H(+). In terms of biological role, involved in pollen wall development. Catalyzes the conversion of long-chain fatty acids to the corresponding omega-hydroxylated fatty acids. Omega-hydroxylated fatty acids, together with in-chain hydroxylated fatty acids, are key monomeric aliphatic building blocks for sporopollenin synthesis during exine formation. The chain is Cytochrome P450 704B1 (CYP704B1) from Arabidopsis thaliana (Mouse-ear cress).